The chain runs to 451 residues: Endosomal transmembrane epsin interactor 1 (451 aa).

Residues 1 to 29 (MILLVNLFVLLSVVCILLNLAGFILGCQG) form the signal peptide. Residues 30–85 (AQFVSSVPRCDLVDLGEGKICFCCEEFQPAKCTDKENALKLFPVQPCSAVHLLLKK) are Lumenal-facing. A helical membrane pass occupies residues 86–106 (VLFALCALNALTTTVCLVAAA). Over 107–451 (LRYLQIFASR…LIGVIRETVL (345 aa)) the chain is Cytoplasmic. The mediates interaction with EPN1 stretch occupies residues 107 to 451 (LRYLQIFASR…LIGVIRETVL (345 aa)). 2 consecutive short sequence motifs (PPxY; mediates interaction with ITCH) follow at residues 148 to 151 (PPSY) and 194 to 197 (PPPY). Over residues 204 to 213 (TDQEQESSFQ) the composition is skewed to polar residues. The disordered stretch occupies residues 204 to 224 (TDQEQESSFQMPEGPETAASP). Lysine 274 is covalently cross-linked (Glycyl lysine isopeptide (Lys-Gly) (interchain with G-Cter in ubiquitin)). Serine 275 carries the post-translational modification Phosphoserine. Residue lysine 365 forms a Glycyl lysine isopeptide (Lys-Gly) (interchain with G-Cter in ubiquitin) linkage.

It belongs to the ENTREP family. As to quaternary structure, interacts with ITCH; enhances the ubiquitination of CXCR4 by ITCH and the subsequent endocytosis and desensitization of the receptor. Interacts with EPN1.

It is found in the early endosome membrane. Its subcellular location is the late endosome membrane. The protein localises to the recycling endosome membrane. It localises to the cell membrane. Functions as an activator of the E3 ubiquitin protein ligase ITCH in the ubiquitination of the CXCL12-activated CXCR4 receptor. Thereby, triggers CXCR4 endocytosis and desensitization, negatively regulating the CXCL12/CXCR4 signaling pathway. In Mus musculus (Mouse), this protein is Endosomal transmembrane epsin interactor 1.